Consider the following 310-residue polypeptide: Homoserine kinase (310 aa).

Pro-85–Ala-95 contributes to the ATP binding site.

The protein belongs to the GHMP kinase family. Homoserine kinase subfamily.

It localises to the cytoplasm. It catalyses the reaction L-homoserine + ATP = O-phospho-L-homoserine + ADP + H(+). Its pathway is amino-acid biosynthesis; L-threonine biosynthesis; L-threonine from L-aspartate: step 4/5. Functionally, catalyzes the ATP-dependent phosphorylation of L-homoserine to L-homoserine phosphate. The protein is Homoserine kinase of Thermoplasma acidophilum (strain ATCC 25905 / DSM 1728 / JCM 9062 / NBRC 15155 / AMRC-C165).